Consider the following 448-residue polypeptide: MPLYIHALACAFGLGSWVSINGLWVELPLIVNVLPEGWDLPSYLTVIIQFANLGPLLVTLAHKFCPGRLRENLAIYAVLSIGVVACILLAVFWNYTTVIFGQPRSTAFFILTFFLALVDCTSSVTFLPFMMQLPAKYITTYFIGEGLSGLVPGLVALAQGVGMSKCVNVTNVSDNVTDPGPSTFIVETQYLPPNFSTEIFFSFLAVMTTISLGAFLILNRLPRTFELSTENLVSDSDAVATVCRGLEDPMDPKTNCPEEVEQKQNEVLLPKPQHSSYQLAFIYVMVLWVNSATNGLLPSVQTFSCMPYGNMAYHLSAALSAVANPVACIIAMFFPKRSLVFLGILCLLGSTFGGYNMAMAAMSPCPLLQDTPLGDAIIVLSWVFFTGLLSYVKVMVGVILRDRSHSALVWCGAAVQTGSLLGSIIMFPLVNVYHLFKSGDICNTNCPL.

The next 3 membrane-spanning stretches (helical) occupy residues 11-31 (AFGL…PLIV), 40-60 (LPSY…LVTL), and 73-93 (LAIY…AVFW). N-linked (GlcNAc...) asparagine glycosylation occurs at asparagine 94. Transmembrane regions (helical) follow at residues 107-127 (AFFI…VTFL) and 138-158 (ITTY…VALA). N-linked (GlcNAc...) asparagine glycans are attached at residues asparagine 168, asparagine 171, asparagine 175, and asparagine 194. The next 6 helical transmembrane spans lie at 198–218 (EIFF…FLIL), 280–300 (AFIY…LPSV), 315–335 (LSAA…MFFP), 339–359 (LVFL…NMAM), 376–396 (AIIV…KVMV), and 407–427 (ALVW…IIMF).

It belongs to the riboflavin transporter family.

The protein resides in the cell membrane. The catalysed reaction is riboflavin(in) = riboflavin(out). Its function is as follows. Plasma membrane transporter mediating the uptake by cells of the water soluble vitamin B2/riboflavin that plays a key role in biochemical oxidation-reduction reactions of the carbohydrate, lipid, and amino acid metabolism. This is Solute carrier family 52, riboflavin transporter, member 3-A (slc52a3a) from Danio rerio (Zebrafish).